Consider the following 541-residue polypeptide: Cyclin-T1-4 (541 aa).

The segment at Val277 to Gly366 is disordered. Over residues Ser307–Gly325 the composition is skewed to polar residues. Basic and acidic residues predominate over residues Gln336–Pro354. Ser396 carries the phosphoserine modification. Residues Glu445–Arg541 are disordered. The segment covering Met493–Ser511 has biased composition (basic and acidic residues). Residues Lys519 to Ser528 show a composition bias toward polar residues. Positions Tyr529–Arg541 are enriched in basic and acidic residues.

Belongs to the cyclin family. Cyclin T subfamily.

In Arabidopsis thaliana (Mouse-ear cress), this protein is Cyclin-T1-4 (CYCT1-4).